Consider the following 164-residue polypeptide: Microfibrillar-associated protein 5 (164 aa).

The signal sequence occupies residues 1-28 (MLFLGQKALLLVLAISIPSDWLPLGVSG). Residues 30–32 (RGD) carry the Cell attachment site motif. N-linked (GlcNAc...) asparagine glycosylation is present at N70.

It belongs to the MFAP family. In terms of assembly, interacts with TGFB2. Interacts with BMP2. Interacts with FBN1 (via N-terminal domain) and FBN2. In terms of processing, forms intermolecular disulfide bonds either with other MAGP-2 molecules or with other components of the microfibrils.

It localises to the secreted. It is found in the extracellular space. The protein localises to the extracellular matrix. May play a role in hematopoiesis. In the cardiovascular system, could regulate growth factors or participate in cell signaling in maintaining large vessel integrity. Component of the elastin-associated microfibrils. This chain is Microfibrillar-associated protein 5 (Mfap5), found in Mus musculus (Mouse).